Consider the following 337-residue polypeptide: 15-cis-phytoene synthase (337 aa).

The protein belongs to the phytoene/squalene synthase family. ATP is required as a cofactor. Mn(2+) serves as cofactor. Requires Mg(2+) as cofactor.

It catalyses the reaction 2 (2E,6E,10E)-geranylgeranyl diphosphate = 15-cis-phytoene + 2 diphosphate. The protein operates within carotenoid biosynthesis; phytoene biosynthesis. Involved in the biosynthesis of carotenoids. Catalyzes the condensation of two molecules of geranylgeranyl diphosphate (GGPP) to give prephytoene diphosphate (PPPP) and the subsequent rearrangement of the cyclopropylcarbinyl intermediate to yield 15-cis-phytoene. The protein is 15-cis-phytoene synthase (crtB) of Synechocystis sp. (strain ATCC 27184 / PCC 6803 / Kazusa).